The primary structure comprises 374 residues: tRNA-specific 2-thiouridylase MnmA (374 aa).

ATP contacts are provided by residues 16 to 23 and M42; that span reads GMSGGVDS. The interval 102–104 is interaction with target base in tRNA; it reads NPD. C107 acts as the Nucleophile in catalysis. An intrachain disulfide couples C107 to C203. Residue G131 coordinates ATP. The interval 153–155 is interaction with tRNA; it reads KDQ. The active-site Cysteine persulfide intermediate is the C203. Positions 311 to 312 are interaction with tRNA; sequence RY.

The protein belongs to the MnmA/TRMU family.

The protein localises to the cytoplasm. It carries out the reaction S-sulfanyl-L-cysteinyl-[protein] + uridine(34) in tRNA + AH2 + ATP = 2-thiouridine(34) in tRNA + L-cysteinyl-[protein] + A + AMP + diphosphate + H(+). In terms of biological role, catalyzes the 2-thiolation of uridine at the wobble position (U34) of tRNA, leading to the formation of s(2)U34. In Exiguobacterium sibiricum (strain DSM 17290 / CCUG 55495 / CIP 109462 / JCM 13490 / 255-15), this protein is tRNA-specific 2-thiouridylase MnmA.